Reading from the N-terminus, the 177-residue chain is NAD(P)H-quinone oxidoreductase subunit 6, chloroplastic (177 aa).

A run of 5 helical transmembrane segments spans residues 10 to 30 (VLLVFLGSGLILGGLGVVLLT), 32 to 52 (PIYSAFSLGLVLVCISLFYIL), 61 to 81 (AQLLIYVGAVNVLIIFAVMFM), 90 to 112 (FYLWTVGDGVTSLVCTSILFSLI), and 152 to 172 (FYLPFELVSIILLVALIGAIT).

It belongs to the complex I subunit 6 family. As to quaternary structure, NDH is composed of at least 16 different subunits, 5 of which are encoded in the nucleus.

Its subcellular location is the plastid. It is found in the chloroplast thylakoid membrane. The catalysed reaction is a plastoquinone + NADH + (n+1) H(+)(in) = a plastoquinol + NAD(+) + n H(+)(out). It carries out the reaction a plastoquinone + NADPH + (n+1) H(+)(in) = a plastoquinol + NADP(+) + n H(+)(out). Functionally, NDH shuttles electrons from NAD(P)H:plastoquinone, via FMN and iron-sulfur (Fe-S) centers, to quinones in the photosynthetic chain and possibly in a chloroplast respiratory chain. The immediate electron acceptor for the enzyme in this species is believed to be plastoquinone. Couples the redox reaction to proton translocation, and thus conserves the redox energy in a proton gradient. This is NAD(P)H-quinone oxidoreductase subunit 6, chloroplastic (ndhG) from Acorus calamus var. americanus (American sweet flag).